A 90-amino-acid polypeptide reads, in one-letter code: Probable Fe(2+)-trafficking protein (90 aa).

It belongs to the Fe(2+)-trafficking protein family.

Could be a mediator in iron transactions between iron acquisition and iron-requiring processes, such as synthesis and/or repair of Fe-S clusters in biosynthetic enzymes. In Verminephrobacter eiseniae (strain EF01-2), this protein is Probable Fe(2+)-trafficking protein.